Reading from the N-terminus, the 337-residue chain is Ral GTPase-activating protein subunit alpha-1 (337 aa).

In terms of assembly, component of the heterodimeric RalGAP1 complex with RALGAPB. Heterodimerization is required for activity. Interacts with the HLH region of TCF3/isoform E12.

It is found in the cytoplasm. The protein resides in the nucleus. In terms of biological role, catalytic subunit of the heterodimeric RalGAP1 complex which acts as a GTPase activator for the Ras-like small GTPases RALA and RALB. The protein is Ral GTPase-activating protein subunit alpha-1 of Sus scrofa (Pig).